The chain runs to 435 residues: Proline--tRNA ligase (435 aa).

The protein belongs to the class-II aminoacyl-tRNA synthetase family. ProS type 2 subfamily. In terms of assembly, homodimer.

The protein localises to the cytoplasm. It carries out the reaction tRNA(Pro) + L-proline + ATP = L-prolyl-tRNA(Pro) + AMP + diphosphate. Catalyzes the attachment of proline to tRNA(Pro) in a two-step reaction: proline is first activated by ATP to form Pro-AMP and then transferred to the acceptor end of tRNA(Pro). The chain is Proline--tRNA ligase (proS) from Sulfurimonas denitrificans (strain ATCC 33889 / DSM 1251) (Thiomicrospira denitrificans (strain ATCC 33889 / DSM 1251)).